The chain runs to 330 residues: Inactive hydroxysteroid dehydrogenase-like protein 1 (330 aa).

Residue A2 is modified to N-acetylalanine. The required for mitochondria translocation stretch occupies residues 2 to 82 (AAVDSFYLLY…SGATDGIGRA (81 aa)). Residues 74 to 80 (GATDGIG), D125, and K222 each bind NADP(+).

It belongs to the short-chain dehydrogenases/reductases (SDR) family. 17-beta-HSD 3 subfamily. Interacts with STYXL1.

It localises to the mitochondrion. This is Inactive hydroxysteroid dehydrogenase-like protein 1 (HSDL1) from Pongo abelii (Sumatran orangutan).